The sequence spans 250 residues: Probable aquaporin TIP-type (250 aa).

Helical transmembrane passes span 20-42 (AYVAEFIATLLFVFAGVGSAIAY) and 55-77 (GLVAVAVAHAFALFVGVSMAANV). An NPA 1 motif is present at residues 83 to 85 (NPA). Helical transmembrane passes span 97–119 (TILTGLFYWIAQCLGSTVACLLL), 140–162 (IQGVVMEIIITFALVYTVYATAA), and 172–194 (IAPIAIGFIVGANILAAGPFSGG). The short motif at 197–199 (NPA) is the NPA 2 element. A helical membrane pass occupies residues 215 to 237 (WIYWAGPLIGGALAGFIYGDVFI).

Belongs to the MIP/aquaporin (TC 1.A.8) family. TIP (TC 1.A.8.10) subfamily. In terms of tissue distribution, expressed in mature seeds and dark-grown seedlings.

The protein resides in the vacuole membrane. Its function is as follows. Channel protein in tonoplast. These proteins may allow the diffusion of amino acids and/or peptides from the vacuolar compartment to the cytoplasm. The sequence is that of Probable aquaporin TIP-type (DIP) from Antirrhinum majus (Garden snapdragon).